A 1181-amino-acid polypeptide reads, in one-letter code: MFFYLSKKIAVPNNVKLKCISWNKDQGFIACGGEDGLLKVLRLETQTDDSKLRGLAAPSNLSMNQNLEGHSGAVQVVTWNEQYQKLTTSDQNGLIIVWMLYKGSWYEEMINNRNKSVVRSMSWNADGQKICIVYEDGAVIVGSVDGNRIWGKDLKGIQLCHVTWSADSKILLFGMANGEIHIYDNQGNFIMKMKLNCLVNVTGAISIAGIHWYHGTEGYVEPDCPCLAICFDNGRCQIMRHENDQNPVLIDTGMYVVGIQWNHIGSVLAVAGSQKVVTQDKDINIVQFYTPFGEHLGTLKVPGKQMCSLSWEGGGLKIALAVDSFIYFANIRPDYKWGYCSNTVVYAYTRPDRPEYCVVFWDTKNSEKYVKYVKSLISITTCGDFCILATKADENHPQEENEMETFGATFVLVLCNSIGTPLDPKYIDLVPLFVAMTKTHVIAASKEAFYTWQYRVAKKLTALEINQITRSRKEGRERIYHVDDVPSGSVDGVFDYSKAIQGTRDPICAITASDKTLIVGRESGVIQRYSFPNVALIQKYSLDCRACQLSLNCNSSRLAIIDIAGVLTFFDLDTRVTDSTGQQVVGELLKLERKDVWDMKWAKDNPDLFAMMEKTRMYVFRNLDPEEPIQTSGYICNFEDLEIKSVLLDEILKDPEHPSKDYIMNFEIRSLRDSRALIEKVGIEDASQFIEDNPHPRLWRLLAEAALQKLDLYTAQQAFVRCKDYQGIKFVKLLGNLQSESMKQAEVIAYFGRFEDAERMYQDMDRRDLAIGLRMKLGDWFRVLQLLKTGSGDADDSLLEQANNAIGEYFADRQKWQNAVQYYVKGRNQERLAECYYMLEDYEGLETLANSLPENHKLLPEIAQMFVRVGMCEQAVSAFLKCNQPKAAVDTCVHLNQWNKAVELAKSHSMKEIGSLLARYASHLLEKNKTLDAIELYRKASYFFDAAKLMYKIADEEAKKRTKPLRVKKLYVLSALLIEQYHEQMKNAQRGKVKGKNSEATSALAGLLEEEVLSTTSRFTDNAWRGAEAYHFFILAQRQLYEGYVDTALKTALHLRDYEDIIPSVEIYSLLALCACASRAFGTCSKAFIKLESLETLSAEQKQQYEDLALEIFTKHTPKDNRKSELNSLLEGGEGKLPTCIATGSPIIEYQFWVCKVCKHYVLAQEISNYNFCPLCHSSVE.

5 WD repeats span residues 12–51 (PNNVKLKCISWNKDQGFIACGGEDGLLKVLRLETQTDDSK), 69–108 (GHSGAVQVVTWNEQYQKLTTSDQNGLIIVWMLYKGSWYEE), 113–152 (RNKSVVRSMSWNADGQKICIVYEDGAVIVGSVDGNRIWGK), 154–193 (LKGIQLCHVTWSADSKILLFGMANGEIHIYDNQGNFIMKM), and 502–539 (GTRDPICAITASDKTLIVGRESGVIQRYSFPNVALIQK).

In terms of assembly, component of the IFT complex A (IFT-A) complex. IFT-A complex is divided into a core subcomplex composed of IFT122:IFT140:WDR19 which is associated with TULP3 and a peripheral subcomplex composed of IFT43:WDR35:TTC21B. Interacts directy with IFT122, ITF43 and TTC21B. Interacts with IFT43. Interacts with CFAP61.

The protein resides in the cytoplasm. The protein localises to the cytoskeleton. Its subcellular location is the microtubule organizing center. It is found in the centrosome. It localises to the cilium axoneme. The protein resides in the cilium basal body. Its function is as follows. As a component of the IFT complex A (IFT-A), a complex required for retrograde ciliary transport and entry into cilia of G protein-coupled receptors (GPCRs), it is involved in ciliogenesis and ciliary protein trafficking. May promote CASP3 activation and TNF-stimulated apoptosis. The protein is WD repeat-containing protein 35 of Mus musculus (Mouse).